A 173-amino-acid chain; its full sequence is dCTP deaminase, dUMP-forming (173 aa).

DCTP-binding positions include 93–98, aspartate 111, 119–121, and glutamine 138; these read RSSIGR and TLE. Residue glutamate 121 is the Proton donor/acceptor of the active site.

It belongs to the dCTP deaminase family. Homotrimer.

It catalyses the reaction dCTP + 2 H2O = dUMP + NH4(+) + diphosphate. It functions in the pathway pyrimidine metabolism; dUMP biosynthesis; dUMP from dCTP: step 1/1. In terms of biological role, bifunctional enzyme that catalyzes both the deamination of dCTP to dUTP and the hydrolysis of dUTP to dUMP without releasing the toxic dUTP intermediate. The protein is dCTP deaminase, dUMP-forming of Leptospira interrogans serogroup Icterohaemorrhagiae serovar copenhageni (strain Fiocruz L1-130).